We begin with the raw amino-acid sequence, 466 residues long: MAEPKPKLHVAVFPWLALGHMIPYLQLSKLIARKGHTVSFISTARNISRLPNISSDLSVNFVSLPLSQTVDHLPENAEATTDVPETHIAYLKKAFDGLSEAFTEFLEASKPNWIVYDILHHWVPPIAEKLGVRRAIFCTFNAASIIIIGGPASVMIQGHDPRKTAEDLIVPPPWVPFETNIVYRLFEAKRIMEYPTAGVTGVELNDNCRLGLAYVGSEVIVIRSCMELEPEWIQLLSKLQGKPVIPIGLLPATPMDDADDEGTWLDIREWLDRHQAKSVVYVALGTEVTISNEEIQGLAHGLELCRLPFFWTLRKRTRASMLLPDGFKERVKERGVIWTEWVPQTKILSHGSVGGFVTHCGWGSAVEGLSFGVPLIMFPCNLDQPLVARLLSGMNIGLEIPRNERDGLFTSASVAETIRHVVVEEEGKIYRNNAASQQKKIFGNKRLQDQYADGFIEFLENPIAGV.

Residues T286, 342–344, 359–367, and 381–384 contribute to the UDP-alpha-D-glucose site; these read VPQ, HCGWGSAVE, and NLDQ.

This sequence belongs to the UDP-glycosyltransferase family.

The protein is UDP-glycosyltransferase 91B1 (UGT91B1) of Arabidopsis thaliana (Mouse-ear cress).